The sequence spans 3124 residues: Collagen alpha-1(XII) chain (3124 aa).

Residues 1-23 form the signal peptide; sequence MRTALCSAVAALCAAALLSSIEA. One can recognise a Fibronectin type-III 1 domain in the interval 27-117; that stretch reads PPSDLNFTII…GQLTIQTGGP (91 aa). N-linked (GlcNAc...) asparagine glycosylation occurs at asparagine 32. One can recognise a VWFA 1 domain in the interval 139 to 311; the sequence is DLVFLVDGSW…DGIVDIQNEI (173 aa). O-linked (Xyl...) (chondroitin sulfate) serine glycosylation occurs at serine 328. Residues 335-424 enclose the Fibronectin type-III 2 domain; the sequence is PASNLVATQI…ITIMEKTQQV (90 aa). The VWFA 2 domain occupies 439–615; the sequence is DVVFLVDGSY…RISFELTQSV (177 aa). Fibronectin type-III domains lie at 633–722, 724–815, 816–906, 908–998, 999–1087, and 1089–1179; these read PAKN…LEVK, APRN…VRGN, PRNL…LEER, SPRN…VSQS, ARTV…ASPF, and PPRN…TLSD. Serine 797, serine 890, and serine 981 each carry an O-linked (Xyl...) (chondroitin sulfate) serine glycan. N-linked (GlcNAc...) asparagine glycans are attached at residues asparagine 1006, asparagine 1032, and asparagine 1044. The disordered stretch occupies residues 1075–1100; the sequence is KSRKAEGTTASPFKPPRNLRTSDSTM. The VWFA 3 domain maps to 1199–1371; it reads DIVLLVDGSW…SFLASIGEDV (173 aa). Fibronectin type-III domains follow at residues 1387–1476, 1477–1568, 1569–1659, 1660–1756, 1759–1853, 1854–1939, 1940–2030, 2031–2121, 2122–2210, and 2211–2299; these read PPSN…YPLS, SVRN…LPLP, GPRG…VPSP, VNLR…TPAP, GPRN…TVKN, MLVY…LERG, TPRN…LPRS, GPRN…VGLL, PPQN…LYLN, and VTDL…LKPT. A glycan (N-linked (GlcNAc...) asparagine) is linked at asparagine 1512. Residue asparagine 1767 is glycosylated (N-linked (GlcNAc...) asparagine). 2 N-linked (GlcNAc...) asparagine glycosylation sites follow: asparagine 2210 and asparagine 2273. One can recognise a VWFA 4 domain in the interval 2327–2500; the sequence is DIVFLTDASW…DAFEKIQDNL (174 aa). The tract at residues 2455 to 2750 is nonhelical region (NC3); the sequence is SGFSVFVVGV…NACTCTQDSV (296 aa). The Laminin G-like domain maps to 2524–2716; the sequence is GFKMLESYNL…IQNFDIVCSP (193 aa). Residues asparagine 2532 and asparagine 2683 are each glycosylated (N-linked (GlcNAc...) asparagine). Disordered stretches follow at residues 2749–2900 and 2935–3080; these read SVGP…GDRG and PNDY…EGEP. Collagen-like domains lie at 2751–2802, 2807–2858, and 2859–2900; these read GPPG…GPNG, GEPG…GPRG, and PPGP…GDRG. Residues 2751–2902 form a triple-helical region (COL2) with 1 imperfection region; sequence GPPGPPGPPG…KGEKGDRGDI (152 aa). Pro residues-rich tracts occupy residues 2752–2761 and 2788–2798; these read PPGPPGPPGG and PPGPQGPPGPQ. The span at 2821–2830 shows a compositional bias: low complexity; the sequence is PGLPGRSGTP. Pro residues predominate over residues 2832 to 2841; sequence LPGPPGPVGP. Composition is skewed to low complexity over residues 2842–2854 and 2865–2878; these read PGER…DGPT and APGV…SGKP. Residues 2899–2901 carry the Cell attachment site motif; that stretch reads RGD. The interval 2903–2945 is nonhelical region (NC2); that stretch reads ASQNMMRAVARQVCEQLINGQMSRFNQMLNQIPNDYYSNRNQP. Residues 2935–2944 show a composition bias toward polar residues; that stretch reads PNDYYSNRNQ. The segment covering 2945–2954 has biased composition (pro residues); that stretch reads PGPPGPPGPP. In terms of domain architecture, Collagen-like 4 spans 2945-2994; that stretch reads PGPPGPPGPPGAAGTRGEPGPGGRPGFPGPPGVQGPPGERGMPGEKGERG. Positions 2946–3048 are triple-helical region (COL1) with 2 imperfections; the sequence is GPPGPPGPPG…RGPPGPPGYC (103 aa). Positions 2961 to 2970 are enriched in gly residues; that stretch reads GEPGPGGRPG. Over residues 3010–3024 the composition is skewed to low complexity; sequence QGESRTGPPGSTGSR. The nonhelical region (NC1) stretch occupies residues 3049-3124; that stretch reads DSSQCASIPY…SLSRKAKRKP (76 aa).

Belongs to the fibril-associated collagens with interrupted helices (FACIT) family. As to quaternary structure, trimer of identical chains each containing 190 kDa of non-triple-helical sequences. The triple-helical tail is stabilized by disulfide bonds at each end. Post-translationally, prolines at the third position of the tripeptide repeating unit (G-X-Y) are hydroxylated in some or all of the chains. In terms of processing, O-glycosylated; glycosaminoglycan of chondroitin-sulfate type. In terms of tissue distribution, type XII collagen is present in tendons, ligaments, perichondrium, and periosteum, all dense connective tissues containing type I collagen.

It is found in the secreted. The protein localises to the extracellular space. It localises to the extracellular matrix. Its function is as follows. Type XII collagen interacts with type I collagen-containing fibrils, the COL1 domain could be associated with the surface of the fibrils, and the COL2 and NC3 domains may be localized in the perifibrillar matrix. This is Collagen alpha-1(XII) chain (COL12A1) from Gallus gallus (Chicken).